The chain runs to 117 residues: Large ribosomal subunit protein bL20c (117 aa).

Belongs to the bacterial ribosomal protein bL20 family.

Its subcellular location is the plastid. The protein resides in the chloroplast. In terms of biological role, binds directly to 23S ribosomal RNA and is necessary for the in vitro assembly process of the 50S ribosomal subunit. It is not involved in the protein synthesizing functions of that subunit. The chain is Large ribosomal subunit protein bL20c from Eucalyptus globulus subsp. globulus (Tasmanian blue gum).